Consider the following 891-residue polypeptide: Schlafen family member 5 (891 aa).

A Glycyl lysine isopeptide (Lys-Gly) (interchain with G-Cter in SUMO2) cross-link involves residue Lys59. Residue Gly578 to Thr585 participates in ATP binding.

The protein belongs to the Schlafen family. Subgroup III subfamily.

In terms of biological role, may have a role in hematopoietic cell differentiation. In Homo sapiens (Human), this protein is Schlafen family member 5 (SLFN5).